Reading from the N-terminus, the 318-residue chain is MLLKMEEMVPEKKNEMKKTSNFVAGVSKNGEYETAVALEKQEDLKTTSKSLIELEEEKQIKEKQLKSELLKKKLEERPKLDNLEDLQTIINLKKRKRVKKVHVPVVKEPEPEEIIENVDQTTFFKAALDNKMPVIEKYLADGGDPNTCDEYKRTALHRACSEGHTDMVEKLIEAGANIEFKDMLESTALHWTCRGGSVETLKLLLNKGAAINARDKLLSTPLHVAVRTGHYECAEHLIACEADLHARDREGDTPMHDGVRLNRYKMMRLLILYGVDLNIKNSAGKTPMELVMQWQNGAKEIFNGLQSKSYKNSHISKF.

Residues 37 to 77 (ALEKQEDLKTTSKSLIELEEEKQIKEKQLKSELLKKKLEER) adopt a coiled-coil conformation. ANK repeat units lie at residues 118–147 (VDQT…DPNT), 151–180 (YKRT…NIEF), 184–213 (LEST…AINA), 217–246 (LLST…DLHA), 250–279 (EGDT…DLNI), and 283–314 (AGKT…KNSH).

The protein resides in the nucleus. Its function is as follows. May act as a nuclear transcription factor that negatively regulates the expression of cardiac genes. This Xenopus tropicalis (Western clawed frog) protein is Ankyrin repeat domain-containing protein 1 (ankrd1).